The sequence spans 303 residues: UDP-N-acetylenolpyruvoylglucosamine reductase (303 aa).

The FAD-binding PCMH-type domain occupies 30 to 195 (KTGGPADLLA…LSARFEMAKG (166 aa)). The active site involves R174. S224 acts as the Proton donor in catalysis. E294 is an active-site residue.

The protein belongs to the MurB family. FAD serves as cofactor.

The protein localises to the cytoplasm. The catalysed reaction is UDP-N-acetyl-alpha-D-muramate + NADP(+) = UDP-N-acetyl-3-O-(1-carboxyvinyl)-alpha-D-glucosamine + NADPH + H(+). It functions in the pathway cell wall biogenesis; peptidoglycan biosynthesis. Its function is as follows. Cell wall formation. The protein is UDP-N-acetylenolpyruvoylglucosamine reductase of Latilactobacillus sakei subsp. sakei (strain 23K) (Lactobacillus sakei subsp. sakei).